The chain runs to 138 residues: Phospholipase A2 homolog crotoxin acid subunit CA (138 aa).

The first 37 residues, 1–37, serve as a signal peptide directing secretion; the sequence is MRALWIVAVLLVGVEGSLVEFETLMMKIAGRSGISYY. 8 cysteine pairs are disulfide-bonded: cysteine 42-cysteine 131, cysteine 44-cysteine 60, cysteine 59-cysteine 111, cysteine 65-cysteine 138, cysteine 66-cysteine 104, cysteine 73-cysteine 97, cysteine 91-cysteine 102, and cysteine 131-cysteine 138. Positions 79–82 are excised as a propeptide; that stretch reads VYTY. A Pyrrolidone carboxylic acid modification is found at glutamine 84. The propeptide occupies 119–124; the sequence is YDYKYL. A Pyrrolidone carboxylic acid modification is found at glutamine 125.

It belongs to the phospholipase A2 family. Group II subfamily. D49 sub-subfamily. In terms of assembly, heterodimer of one of the acidic (CA1, CA2, CA3 or CA4) and one of the basic (CBa1, CBa2, CBb, CBc or CBd) subunits; non-covalently linked. The acidic subunit is non-toxic, without enzymatic activity and comprises 3 peptides that are cross-linked by 5 disulfide bridges. The basic subunit is toxic, has phospholipase A2 activity and is composed of a single chain. Multiple variants of each subunit give different crotoxin complexes that can be subdivided into 2 classes: (1) those of high toxicity, low PLA2 activity (CBb, CBc and CBd linked with high affinity to any CA) and high stability (K(d)=4.5 nM) and (2) those of moderate toxicity, high PLA2 activity (CBa2 linked with low affinity to any CA) and low stability (K(d)=25 nM). As to expression, expressed by the venom gland.

The protein localises to the secreted. Its function is as follows. CAalpha-CAbeta-CAgamma: The acidic subunit of crotoxin (CA) is a heterotrimer of three disulfide-linked chains generated by post-translational maturation of a PLA2-like precursor. CA has no PLA2 activity and is not neurotoxic by itself, but plays several important functions in the crotoxin complex by increasing the lethal potency of the uncomplexed CB subunit. It acts by physically occluding the hydrophobic interfacial binding surface (IBS) of CB. This effect decreases the adsorption of CB to phospholipid membranes, targeting the crotoxin complex to reach the specific presynaptic receptor (R48) at the neuromuscular junction. It also prevents the formation of the reactive CB dimer. Moreover, the CA subunit inhibits the catalytic activity by partially masking the catalytic site of CB and inhibits its anticoagulant activity. Functionally, heterodimer CA-CB: Crotoxin is a potent presynaptic neurotoxin that possesses phospholipase A2 (PLA2) activity and exerts a lethal action by blocking neuromuscular transmission. It consists of a non-covalent association of a basic and weakly toxic PLA2 subunit (CBa2, CBb, CBc, or CBd), with a small acidic, non-enzymatic and non-toxic subunit (CA1, CA2, CA3 or CA4). The complex acts by binding to a specific 48-kDa protein (R48/CAPT) receptor located on presynaptic membranes, forming a transient ternary complex CA-CB-R48, followed by dissociation of the CA-CB complex and release of the CA subunit. At equilibrium, only the CB subunits remain associated with the specific crotoxin receptor. In addition to neurotoxicity, crotoxin has been found to exert myotoxicity, nephrotoxicity, and cardiovascular toxicity. Moreover, anti-inflammatory, immunomodulatory, anti-tumor and analgesic effects of crotoxin have also been reported. Found in the venom as a monomer and stabilized by one disulfide bond (Cys-131 and Cys-138). This peptide induces potent antinociceptive effects in acute and chronic pain models. This effect is mediated by the release of peripheral dynorphin A, an endogenous agonist of kappa-opioid receptors, and this release is dependent on cannabinoid receptor CB2 activation. The sequence is that of Phospholipase A2 homolog crotoxin acid subunit CA from Crotalus durissus terrificus (South American rattlesnake).